The following is a 123-amino-acid chain: Small ribosomal subunit protein uS12 (123 aa).

A 3-methylthioaspartic acid modification is found at Asp89.

Belongs to the universal ribosomal protein uS12 family. In terms of assembly, part of the 30S ribosomal subunit. Contacts proteins S8 and S17. May interact with IF1 in the 30S initiation complex.

In terms of biological role, with S4 and S5 plays an important role in translational accuracy. Interacts with and stabilizes bases of the 16S rRNA that are involved in tRNA selection in the A site and with the mRNA backbone. Located at the interface of the 30S and 50S subunits, it traverses the body of the 30S subunit contacting proteins on the other side and probably holding the rRNA structure together. The combined cluster of proteins S8, S12 and S17 appears to hold together the shoulder and platform of the 30S subunit. The protein is Small ribosomal subunit protein uS12 of Maridesulfovibrio salexigens (strain ATCC 14822 / DSM 2638 / NCIMB 8403 / VKM B-1763) (Desulfovibrio salexigens).